The primary structure comprises 198 residues: Ribonuclease HII (198 aa).

Positions 10–198 constitute an RNase H type-2 domain; sequence QLVAGVDEVG…PVKRALGLAS (189 aa). Residues aspartate 16, glutamate 17, and aspartate 108 each coordinate a divalent metal cation.

Belongs to the RNase HII family. Mn(2+) serves as cofactor. It depends on Mg(2+) as a cofactor.

Its subcellular location is the cytoplasm. The enzyme catalyses Endonucleolytic cleavage to 5'-phosphomonoester.. Functionally, endonuclease that specifically degrades the RNA of RNA-DNA hybrids. The protein is Ribonuclease HII of Escherichia fergusonii (strain ATCC 35469 / DSM 13698 / CCUG 18766 / IAM 14443 / JCM 21226 / LMG 7866 / NBRC 102419 / NCTC 12128 / CDC 0568-73).